A 132-amino-acid polypeptide reads, in one-letter code: Small ribosomal subunit protein uS8 (132 aa).

The protein belongs to the universal ribosomal protein uS8 family. In terms of assembly, part of the 30S ribosomal subunit. Contacts proteins S5 and S12.

Its function is as follows. One of the primary rRNA binding proteins, it binds directly to 16S rRNA central domain where it helps coordinate assembly of the platform of the 30S subunit. The chain is Small ribosomal subunit protein uS8 from Anoxybacillus flavithermus (strain DSM 21510 / WK1).